The sequence spans 81 residues: Exodeoxyribonuclease 7 small subunit (81 aa).

Belongs to the XseB family. In terms of assembly, heterooligomer composed of large and small subunits.

It is found in the cytoplasm. The catalysed reaction is Exonucleolytic cleavage in either 5'- to 3'- or 3'- to 5'-direction to yield nucleoside 5'-phosphates.. Its function is as follows. Bidirectionally degrades single-stranded DNA into large acid-insoluble oligonucleotides, which are then degraded further into small acid-soluble oligonucleotides. This chain is Exodeoxyribonuclease 7 small subunit, found in Rhodopseudomonas palustris (strain BisA53).